Reading from the N-terminus, the 111-residue chain is Putative single-stranded DNA-binding protein ycf41 (111 aa).

Positions 1–98 constitute an SSB domain; sequence MNKCNLLVQI…FSTSRIFKYK (98 aa).

It localises to the plastid. The protein localises to the chloroplast. This Porphyra purpurea (Red seaweed) protein is Putative single-stranded DNA-binding protein ycf41 (ycf41).